Reading from the N-terminus, the 167-residue chain is SsrA-binding protein (167 aa).

It belongs to the SmpB family.

The protein resides in the cytoplasm. Required for rescue of stalled ribosomes mediated by trans-translation. Binds to transfer-messenger RNA (tmRNA), required for stable association of tmRNA with ribosomes. tmRNA and SmpB together mimic tRNA shape, replacing the anticodon stem-loop with SmpB. tmRNA is encoded by the ssrA gene; the 2 termini fold to resemble tRNA(Ala) and it encodes a 'tag peptide', a short internal open reading frame. During trans-translation Ala-aminoacylated tmRNA acts like a tRNA, entering the A-site of stalled ribosomes, displacing the stalled mRNA. The ribosome then switches to translate the ORF on the tmRNA; the nascent peptide is terminated with the 'tag peptide' encoded by the tmRNA and targeted for degradation. The ribosome is freed to recommence translation, which seems to be the essential function of trans-translation. This Stenotrophomonas maltophilia (strain R551-3) protein is SsrA-binding protein.